We begin with the raw amino-acid sequence, 345 residues long: Alpha-N-acetylneuraminide alpha-2,8-sialyltransferase (345 aa).

Topologically, residues 1 to 15 (MKLQGSRMWLCPRTR) are cytoplasmic. Residues 16-36 (LPVGASALGFLILCWLYVFPG) form a helical; Signal-anchor for type II membrane protein membrane-spanning segment. Residues 37-345 (YRLPGHKEMV…KKDVSSQKPH (309 aa)) are Lumenal-facing. N-linked (GlcNAc...) asparagine glycans are attached at residues Asn59 and Asn107. 2 disulfide bridges follow: Cys126/Cys275 and Cys140/Cys335. CMP-N-acetyl-beta-neuraminate-binding residues include Asn131 and Asn154. Substrate-binding positions include Asn154 and 176-178 (NPS). N-linked (GlcNAc...) asparagine glycosylation is present at Asn233. CMP-N-acetyl-beta-neuraminate-binding residues include Ser262, Thr263, Gly264, Trp284, and His298. 262–264 (STG) is a substrate binding site. Catalysis depends on His310, which acts as the Proton donor/acceptor.

The protein belongs to the glycosyltransferase 29 family.

The protein localises to the golgi apparatus membrane. It catalyses the reaction an N-acetyl-alpha-neuraminyl-(2-&gt;3)-beta-D-galactosyl derivative + CMP-N-acetyl-beta-neuraminate = an N-acetyl-alpha-neuraminyl-(2-&gt;8)-N-acetyl-alpha-neuraminyl-(2-&gt;3)-beta-D-galactosyl derivative + CMP + H(+). The enzyme catalyses a ganglioside GM3 (d18:1(4E)) + CMP-N-acetyl-beta-neuraminate = a ganglioside GD3 (d18:1(4E)) + CMP + H(+). It carries out the reaction a ganglioside GD3 (d18:1(4E)) + CMP-N-acetyl-beta-neuraminate = a ganglioside GT3 (d18:1(4E)) + CMP + H(+). The catalysed reaction is a ganglioside GD1a (d18:1(4E)) + CMP-N-acetyl-beta-neuraminate = a ganglioside GT1a (d18:1(4E)) + CMP + H(+). It catalyses the reaction a ganglioside GT1b (d18:1(4E)) + CMP-N-acetyl-beta-neuraminate = a ganglioside GQ1b (d18:1(4E)) + CMP + H(+). The enzyme catalyses a ganglioside GM1b (d18:1(4E)) + CMP-N-acetyl-beta-neuraminate = a ganglioside GD1c (d18:1(4E)) + CMP + H(+). It carries out the reaction a ganglioside GD3 + CMP-N-acetyl-beta-neuraminate = a ganglioside GT3 + CMP + H(+). The catalysed reaction is [alpha-N-acetylneuraminyl-(2-&gt;8)](n)-alpha-N-acetylneuraminyl-(2-&gt;8)-alpha-N-acetylneuraminyl-(2-&gt;3)-beta-D-galactosyl-(1-&gt;4)-beta-D-glucosyl-(1&lt;-&gt;1)-ceramide + CMP-N-acetyl-beta-neuraminate = [alpha-N-acetylneuraminyl-(2-&gt;8)](n+1)-alpha-N-acetylneuraminyl-(2-&gt;8)-alpha-N-acetylneuraminyl-(2-&gt;3)-beta-D-galactosyl-(1-&gt;4)-beta-D-glucosyl-(1&lt;-&gt;1)-ceramide + CMP + H(+). It functions in the pathway protein modification; protein glycosylation. The protein operates within lipid metabolism; sphingolipid metabolism. Its function is as follows. Catalyzes the addition of sialic acid in alpha 2,8-linkage to the sialic acid moiety of the ganglioside GM3 to form ganglioside GD3; gangliosides are a subfamily of complex glycosphingolipds that contain one or more residues of sialic acid. Glycosphingolipids are required for convergence extension movements during early development. Can catalyze the addition of a second alpha-2,8- sialic acid to GD3 to form GT3. Can use GM1b, GD1a and GT1b as acceptor substrates to synthesize GD1c, GT1a and GQ1b respectively. The chain is Alpha-N-acetylneuraminide alpha-2,8-sialyltransferase from Xenopus tropicalis (Western clawed frog).